Here is a 176-residue protein sequence, read N- to C-terminus: Translation initiation factor IF-3 (176 aa).

Belongs to the IF-3 family. Monomer.

It is found in the cytoplasm. Functionally, IF-3 binds to the 30S ribosomal subunit and shifts the equilibrium between 70S ribosomes and their 50S and 30S subunits in favor of the free subunits, thus enhancing the availability of 30S subunits on which protein synthesis initiation begins. The sequence is that of Translation initiation factor IF-3 from Streptococcus equi subsp. zooepidemicus (strain H70).